The chain runs to 296 residues: Phosphatidylglycerol--prolipoprotein diacylglyceryl transferase (296 aa).

The next 3 helical transmembrane spans lie at 17–37 (LAVR…IVVG), 59–79 (MMFY…VLFY), and 97–117 (GGMS…LFAW). Position 142 (Arg142) interacts with a 1,2-diacyl-sn-glycero-3-phospho-(1'-sn-glycerol). The next 2 membrane-spanning stretches (helical) occupy residues 230-250 (MGAI…TVEF) and 265-285 (LSMG…MMIW).

It belongs to the Lgt family.

It localises to the cell inner membrane. It carries out the reaction L-cysteinyl-[prolipoprotein] + a 1,2-diacyl-sn-glycero-3-phospho-(1'-sn-glycerol) = an S-1,2-diacyl-sn-glyceryl-L-cysteinyl-[prolipoprotein] + sn-glycerol 1-phosphate + H(+). It participates in protein modification; lipoprotein biosynthesis (diacylglyceryl transfer). Its function is as follows. Catalyzes the transfer of the diacylglyceryl group from phosphatidylglycerol to the sulfhydryl group of the N-terminal cysteine of a prolipoprotein, the first step in the formation of mature lipoproteins. The protein is Phosphatidylglycerol--prolipoprotein diacylglyceryl transferase of Burkholderia pseudomallei (strain 668).